A 1143-amino-acid polypeptide reads, in one-letter code: DNA-directed RNA polymerase subunit beta (1143 aa).

It belongs to the RNA polymerase beta chain family. In terms of assembly, in plastids the minimal PEP RNA polymerase catalytic core is composed of four subunits: alpha, beta, beta', and beta''. When a (nuclear-encoded) sigma factor is associated with the core the holoenzyme is formed, which can initiate transcription.

The protein localises to the plastid. It localises to the chloroplast. It carries out the reaction RNA(n) + a ribonucleoside 5'-triphosphate = RNA(n+1) + diphosphate. DNA-dependent RNA polymerase catalyzes the transcription of DNA into RNA using the four ribonucleoside triphosphates as substrates. This Porphyra purpurea (Red seaweed) protein is DNA-directed RNA polymerase subunit beta.